We begin with the raw amino-acid sequence, 414 residues long: Phospholipid-transporting ATPase accessory subunit LEM3 (414 aa).

The required for localization to the plasma membrane stretch occupies residues 1–50 (MVNFDLGQVGEVFRRKDKGAIVSGDNPEEEEDVDASEFEEDEVKPVRTKN). At 1–74 (MVNFDLGQVG…AINPVLTPRT (74 aa)) the chain is on the cytoplasmic side. Residues 20 to 52 (AIVSGDNPEEEEDVDASEFEEDEVKPVRTKNRR) are disordered. Positions 26–42 (NPEEEEDVDASEFEEDE) are enriched in acidic residues. Phosphoserine is present on S36. Residues 75–95 (VLPLYLLIAVVFVIVGGCILA) traverse the membrane as a helical segment. Over 96-372 (QNSKVDEVTI…HGSHLGGRNP (277 aa)) the chain is Extracellular. Disulfide bonds link C110-C159 and C216-C231. N113 carries N-linked (GlcNAc...) asparagine glycosylation. 5 N-linked (GlcNAc...) asparagine glycosylation sites follow: N240, N256, N279, N298, and N332. Residues 373–393 (FLGIVYLIGGCICAAMALILL) traverse the membrane as a helical segment. Residues 394 to 414 (TFWLFGGRKIADASSLSWNMK) lie on the Cytoplasmic side of the membrane. The interval 400–414 (GRKIADASSLSWNMK) is required for localization to the plasma membrane.

It belongs to the CDC50/LEM3 family. Component of a flippase complex consisting of DNF1 or DNF2 and LEM3. Interacts with DNF1; the interaction is direct and required for their mutual export from the endoplasmic reticulum. Interacts with DNF2; the interaction is direct and required for their mutual export from the endoplasmic reticulum.

It is found in the cell membrane. Accessory component of a P4-ATPase flippase complex which catalyzes the hydrolysis of ATP coupled to the transport of glucosylceramide, phosphatidylcholine, phosphatidylethanolamine, and small amounts of phosphatidylserine from the lumenal to the cytosolic leaflet of the cell membrane and ensures the maintenance of asymmetric distribution of phospholipids. Contributes to substrate binding and specificity of the P4-ATPase catalytic subunit. The polypeptide is Phospholipid-transporting ATPase accessory subunit LEM3 (Saccharomyces cerevisiae (strain ATCC 204508 / S288c) (Baker's yeast)).